A 710-amino-acid polypeptide reads, in one-letter code: Solute carrier organic anion transporter family member 3A1 (710 aa).

Met1 bears the N-acetylmethionine mark. The span at 1–15 (MQGKKPGGSSGGGRS) shows a compositional bias: gly residues. The interval 1–25 (MQGKKPGGSSGGGRSGELQGDEAQR) is disordered. The Cytoplasmic segment spans residues 1–40 (MQGKKPGGSSGGGRSGELQGDEAQRNKKKKKKVSCFSNIK). Residues 41-60 (IFLVSECALMLAQGTVGAYL) traverse the membrane as a helical segment. Over 61–79 (VSVLTTLERRFNLQSADVG) the chain is Extracellular. The chain crosses the membrane as a helical span at residues 80–100 (VIASSFEIGNLALILFVSYFG). Topologically, residues 101–106 (ARGHRP) are cytoplasmic. A helical transmembrane segment spans residues 107 to 131 (RLIGCGGIVMALGALLSALPEFLTH). Topologically, residues 132-174 (QYKYEAGEIRWGAEGRDVCATNGSSSDEGPDPDLICRNRTATN) are extracellular. Asn153 and Asn169 each carry an N-linked (GlcNAc...) asparagine glycan. The helical transmembrane segment at 175 to 203 (MMYLLLIGAQVLLGIGATPVQPLGVSYID) threads the bilayer. Residues 204–222 (DHVRRKDSSLYIGILFTML) are Cytoplasmic-facing. Residues 223-243 (VFGPACGFILGSFCTKIYVDA) form a helical membrane-spanning segment. Over 244–261 (VFIDTSNLDITPDDPRWI) the chain is Extracellular. The chain crosses the membrane as a helical span at residues 262–286 (GAWWGGFLLCGALLFFSSLLMFGFP). Topologically, residues 287 to 344 (QSLPPHSDPGMESEQAMLPEREYERPKPSNGVLRHPLEPDSSASCFQQLRVIPKVTKH) are cytoplasmic. Residues 345-366 (LLSNPVFTCIVLAACMEIAVVA) form a helical membrane-spanning segment. Residues 367–386 (GFAAFLGKYLEQQFNLTTSS) lie on the Extracellular side of the membrane. A glycan (N-linked (GlcNAc...) asparagine) is linked at Asn381. The helical transmembrane segment at 387–410 (ANQLLGMTAIPCACLGIFLGGLLV) threads the bilayer. Over 411 to 414 (KKLS) the chain is Cytoplasmic. Residues 415 to 438 (LSALGAIRMAMLVNLVSTACYVSF) traverse the membrane as a helical segment. At 439–539 (LFLGCDTGPV…PGCQEAFLTF (101 aa)) the chain is on the extracellular side. Asn457 carries N-linked (GlcNAc...) asparagine glycosylation. The Kazal-like domain occupies 465–513 (LDPYSPCNNNCECQTDSFTPVCGADGITYLSACFAGCNSTNLTGCACLT). Cystine bridges form between Cys471-Cys497, Cys475-Cys486, and Cys477-Cys501. Asn502, Asn505, and Asn519 each carry an N-linked (GlcNAc...) asparagine glycan. Residues 540–562 (LCVMCVCSLIGAMAQTPSVIILI) form a helical membrane-spanning segment. The Cytoplasmic portion of the chain corresponds to 563 to 571 (RTVSPELKS). A helical transmembrane segment spans residues 572–597 (YALGVLFLLLRLLGFIPPPLIFGAGI). Residues 598 to 630 (DSTCLFWSTFCGEQGACVLYDNVVYRYLYVSIA) are Extracellular-facing. A helical transmembrane segment spans residues 631–648 (IALKSFAFILYTTTWQCL). The Cytoplasmic segment spans residues 649–705 (RKNYKRYIKNHEGGLSTSEFFASTLTLDNLGRDPVPAHQTHRTKFIYNLEDHEWCEN).

This sequence belongs to the organo anion transporter (TC 2.A.60) family. As to expression, widely expressed.

It localises to the basolateral cell membrane. The protein resides in the apical cell membrane. Its subcellular location is the basal cell membrane. The catalysed reaction is L-thyroxine(out) = L-thyroxine(in). It catalyses the reaction prostaglandin E1(out) = prostaglandin E1(in). The enzyme catalyses prostaglandin E2(out) = prostaglandin E2(in). It carries out the reaction prostaglandin F2alpha(out) = prostaglandin F2alpha(in). The catalysed reaction is (5Z,8Z,11Z,14Z)-eicosatetraenoate(out) = (5Z,8Z,11Z,14Z)-eicosatetraenoate(in). It catalyses the reaction taurocholate(out) = taurocholate(in). The enzyme catalyses glycocholate(out) = glycocholate(in). It carries out the reaction estrone 3-sulfate(out) = estrone 3-sulfate(in). The catalysed reaction is argipressin(out) = argipressin(in). Its function is as follows. Putative organic anion antiporter with apparent broad substrate specificity. Recognizes various substrates including thyroid hormone L-thyroxine, prostanoids such as prostaglandin E1 and E2, bile acids such as taurocholate, glycolate and glycochenodeoxycholate and peptide hormones such as L-arginine vasopressin, likely operating in a tissue-specific manner. The transport mechanism, its electrogenicity and potential tissue-specific counterions remain to be elucidated. The sequence is that of Solute carrier organic anion transporter family member 3A1 (Slco3a1) from Mus musculus (Mouse).